The sequence spans 278 residues: 4-hydroxy-3-methylbut-2-enyl diphosphate reductase (278 aa).

C12 is a [4Fe-4S] cluster binding site. (2E)-4-hydroxy-3-methylbut-2-enyl diphosphate is bound by residues H36 and H70. 2 residues coordinate dimethylallyl diphosphate: H36 and H70. H36 and H70 together coordinate isopentenyl diphosphate. Position 92 (C92) interacts with [4Fe-4S] cluster. H120 serves as a coordination point for (2E)-4-hydroxy-3-methylbut-2-enyl diphosphate. Residue H120 participates in dimethylallyl diphosphate binding. An isopentenyl diphosphate-binding site is contributed by H120. The active-site Proton donor is the E122. Position 158 (T158) interacts with (2E)-4-hydroxy-3-methylbut-2-enyl diphosphate. A [4Fe-4S] cluster-binding site is contributed by C186. 3 residues coordinate (2E)-4-hydroxy-3-methylbut-2-enyl diphosphate: S214, N216, and S258. Dimethylallyl diphosphate contacts are provided by S214, N216, and S258. S214, N216, and S258 together coordinate isopentenyl diphosphate.

Belongs to the IspH family. [4Fe-4S] cluster is required as a cofactor.

The enzyme catalyses isopentenyl diphosphate + 2 oxidized [2Fe-2S]-[ferredoxin] + H2O = (2E)-4-hydroxy-3-methylbut-2-enyl diphosphate + 2 reduced [2Fe-2S]-[ferredoxin] + 2 H(+). It catalyses the reaction dimethylallyl diphosphate + 2 oxidized [2Fe-2S]-[ferredoxin] + H2O = (2E)-4-hydroxy-3-methylbut-2-enyl diphosphate + 2 reduced [2Fe-2S]-[ferredoxin] + 2 H(+). It participates in isoprenoid biosynthesis; dimethylallyl diphosphate biosynthesis; dimethylallyl diphosphate from (2E)-4-hydroxy-3-methylbutenyl diphosphate: step 1/1. It functions in the pathway isoprenoid biosynthesis; isopentenyl diphosphate biosynthesis via DXP pathway; isopentenyl diphosphate from 1-deoxy-D-xylulose 5-phosphate: step 6/6. Its function is as follows. Catalyzes the conversion of 1-hydroxy-2-methyl-2-(E)-butenyl 4-diphosphate (HMBPP) into a mixture of isopentenyl diphosphate (IPP) and dimethylallyl diphosphate (DMAPP). Acts in the terminal step of the DOXP/MEP pathway for isoprenoid precursor biosynthesis. The protein is 4-hydroxy-3-methylbut-2-enyl diphosphate reductase of Campylobacter lari (strain RM2100 / D67 / ATCC BAA-1060).